Here is a 178-residue protein sequence, read N- to C-terminus: Cytidylate kinase (178 aa).

7-15 (GLPGTGTTT) is a binding site for ATP.

The protein belongs to the cytidylate kinase family. Type 2 subfamily.

The protein localises to the cytoplasm. The enzyme catalyses CMP + ATP = CDP + ADP. It carries out the reaction dCMP + ATP = dCDP + ADP. In Methanococcus maripaludis (strain DSM 14266 / JCM 13030 / NBRC 101832 / S2 / LL), this protein is Cytidylate kinase.